A 560-amino-acid chain; its full sequence is DNA ligase B (560 aa).

Lys-124 (N6-AMP-lysine intermediate) is an active-site residue.

This sequence belongs to the NAD-dependent DNA ligase family. LigB subfamily.

The enzyme catalyses NAD(+) + (deoxyribonucleotide)n-3'-hydroxyl + 5'-phospho-(deoxyribonucleotide)m = (deoxyribonucleotide)n+m + AMP + beta-nicotinamide D-nucleotide.. Its function is as follows. Catalyzes the formation of phosphodiester linkages between 5'-phosphoryl and 3'-hydroxyl groups in double-stranded DNA using NAD as a coenzyme and as the energy source for the reaction. This chain is DNA ligase B, found in Escherichia coli O6:H1 (strain CFT073 / ATCC 700928 / UPEC).